The sequence spans 254 residues: Hydrolase tropI (254 aa).

Residues cysteine 141, aspartate 187, and histidine 219 contribute to the active site.

Belongs to the dienelactone hydrolase family.

It functions in the pathway secondary metabolite biosynthesis. Hydrolase; part of the gene cluster that mediates the biosynthesis of the tropolone class of fungal maleic anhydrides. The pathway begins with the synthesis of 3-methylorcinaldehyde by the non-reducing polyketide synthase (PKS) tropA. 3-methylorcinaldehyde is the substrate for the FAD-dependent monooxygenase tropB to yield a dearomatized hydroxycyclohexadione. The 2-oxoglutarate-dependent dioxygenase tropC then performs the oxidative ring expansion to provide the first tropolone metabolite stipitaldehyde. Trop D converts stipitaldehyde into stipitacetal which is in turn converted to stipitalide by the short-chain dehydrogenase/reductase tropE. The next steps involve tropF, tropG, tropH, tropI and tropJ to form successive tropolone maleic anhydrides including stipitaldehydic, stipitatonic and stipitatic acids. The polypeptide is Hydrolase tropI (Talaromyces stipitatus (strain ATCC 10500 / CBS 375.48 / QM 6759 / NRRL 1006) (Penicillium stipitatum)).